The primary structure comprises 120 residues: Small cysteine and glycine repeat-containing protein 2 (120 aa).

The segment at Cys-4–Gly-104 is 19 X 2 AA repeats of CG.

It belongs to the KRTAP type 28 family.

Its function is as follows. In the hair cortex, hair keratin intermediate filaments are embedded in an interfilamentous matrix, consisting of hair keratin-associated proteins (KRTAP), which are essential for the formation of a rigid and resistant hair shaft through their extensive disulfide bond cross-linking with abundant cysteine residues of hair keratins. The matrix proteins include the high-sulfur and high-glycine-tyrosine keratins. The sequence is that of Small cysteine and glycine repeat-containing protein 2 from Homo sapiens (Human).